A 309-amino-acid chain; its full sequence is L-lactate dehydrogenase 2 (309 aa).

Residues Val16, Asp37, Tyr67, and 81–82 contribute to the NAD(+) site; that span reads GV. Arg90 contacts substrate. Ser103 lines the NAD(+) pocket. Position 122–125 (122–125) interacts with substrate; sequence NPVD. Residue Thr145 coordinates NAD(+). 150-153 is a substrate binding site; that stretch reads DTAR. The active-site Proton acceptor is the His177. Position 227 (Thr227) interacts with substrate.

Belongs to the LDH/MDH superfamily. LDH family. Homotetramer.

The protein localises to the cytoplasm. It catalyses the reaction (S)-lactate + NAD(+) = pyruvate + NADH + H(+). The protein operates within fermentation; pyruvate fermentation to lactate; (S)-lactate from pyruvate: step 1/1. Catalyzes the conversion of lactate to pyruvate. This chain is L-lactate dehydrogenase 2, found in Lactiplantibacillus plantarum (strain ATCC BAA-793 / NCIMB 8826 / WCFS1) (Lactobacillus plantarum).